A 429-amino-acid polypeptide reads, in one-letter code: Serine hydroxymethyltransferase 1 (429 aa).

(6S)-5,6,7,8-tetrahydrofolate-binding positions include Leu-125 and 129 to 131; that span reads GHL. Residue Lys-234 is modified to N6-(pyridoxal phosphate)lysine.

This sequence belongs to the SHMT family. In terms of assembly, homodimer. Requires pyridoxal 5'-phosphate as cofactor.

Its subcellular location is the cytoplasm. It catalyses the reaction (6R)-5,10-methylene-5,6,7,8-tetrahydrofolate + glycine + H2O = (6S)-5,6,7,8-tetrahydrofolate + L-serine. It participates in one-carbon metabolism; tetrahydrofolate interconversion. It functions in the pathway amino-acid biosynthesis; glycine biosynthesis; glycine from L-serine: step 1/1. In terms of biological role, catalyzes the reversible interconversion of serine and glycine with tetrahydrofolate (THF) serving as the one-carbon carrier. This reaction serves as the major source of one-carbon groups required for the biosynthesis of purines, thymidylate, methionine, and other important biomolecules. Also exhibits THF-independent aldolase activity toward beta-hydroxyamino acids, producing glycine and aldehydes, via a retro-aldol mechanism. The chain is Serine hydroxymethyltransferase 1 from Agrobacterium fabrum (strain C58 / ATCC 33970) (Agrobacterium tumefaciens (strain C58)).